We begin with the raw amino-acid sequence, 638 residues long: Epithelial sodium channel subunit delta (638 aa).

Over residues 1-13 (MAEHRSMDGRMEA) the composition is skewed to basic and acidic residues. Residues 1–47 (MAEHRSMDGRMEAATRGGSHLQAAAQTPPRPGPPSAPPPPPKEGHQE) form a disordered region. Residues 1–86 (MAEHRSMDGR…CSRGNRLKTT (86 aa)) are Cytoplasmic-facing. The span at 28–41 (PPRPGPPSAPPPPP) shows a compositional bias: pro residues. A helical membrane pass occupies residues 87–107 (SWGLLSLGALVALCWQLGLLF). The Extracellular portion of the chain corresponds to 108 to 530 (ERHWHRPVLM…VPQLLSAMGS (423 aa)). 2 N-linked (GlcNAc...) asparagine glycosylation sites follow: asparagine 166 and asparagine 384. Residues 531–551 (LCSLWFGASVLSLLELLELLL) form a helical membrane-spanning segment. At 552-638 (DASALTLVLG…GPQPLETLDT (87 aa)) the chain is on the cytoplasmic side. Residues 574-613 (RASPASGASSIKPEASQMPTPAGGTSDDPEPSGPHLPRVM) form a disordered region.

It belongs to the amiloride-sensitive sodium channel (TC 1.A.6) family. SCNN1D subfamily. As to quaternary structure, can form an alternative heterotrimeric epithelial sodium channel (ENaC), composed of a delta (SCNN1D), beta (SCNN1B), and gamma (SCNN1G) subunit, where the delta (SCNN1D) subunit replaces the alpha (SCNN1A) subunit.

The protein localises to the apical cell membrane. The catalysed reaction is Na(+)(in) = Na(+)(out). Its activity is regulated as follows. Originally identified and characterized by its inhibition by the diuretic drug amiloride. Functionally, potential alternative pore-forming subunit of the epithelial sodium channel (ENaC), capable of replacing the alpha/SCNN1A subunit, creating a more active channel with distinct properties. ENaC functions in epithelial tissues, where it facilitates the electrodiffusion of sodium ions from the extracellular fluid through the apical membrane of cells, with water following osmotically, regulating sodium balance and fluid homeostasis. This subunit could also function independently as a sodium channel or assemble into other tissue-specific heterotrimeric sodium channels. The chain is Epithelial sodium channel subunit delta from Pan troglodytes (Chimpanzee).